Consider the following 392-residue polypeptide: MNIHEYQGKDILRKFGVAVPRGIVAYSPEEAKQAAEQLFDELGCPVVVIKAQIHAGGRGKAGGVKLAKSPEESLDIAHQLIGMTLITHQTGPEGKEVRRVLVEEGMNIEKEFYVGITLDRSTSKNVLMVSTEGGMEIEKVAEETPERLLKIQIDPLFGMQGFQAREAAFFLGLKGEQFRNAVNFITALYNAYISIDAALAEINPLVVTKEGKVLALDAKINFDDNALFRHKEFHELRDTNEEDPFEVEASKSNLNYVRLDGNVGCMVNGAGLAMGTMDMIQLAGGKPANFLDVGGSASPQTVEEGFKIILSDKNVKAILVNIFGGIVRCDRVAGGIIEAAKKIDLHLPVIVRLEGTNAPIAQKMLDDSGLNLIAAKGLRDAAQKVQEALAAS.

Residues 9-248 (KDILRKFGVA…TNEEDPFEVE (240 aa)) enclose the ATP-grasp domain. Residues K50, 57–59 (GRG), E103, M106, and E111 contribute to the ATP site. Residues N203 and D217 each coordinate Mg(2+). Residues N268 and 325 to 327 (GIV) contribute to the substrate site.

Belongs to the succinate/malate CoA ligase beta subunit family. Heterotetramer of two alpha and two beta subunits. Mg(2+) is required as a cofactor.

The enzyme catalyses succinate + ATP + CoA = succinyl-CoA + ADP + phosphate. It carries out the reaction GTP + succinate + CoA = succinyl-CoA + GDP + phosphate. Its pathway is carbohydrate metabolism; tricarboxylic acid cycle; succinate from succinyl-CoA (ligase route): step 1/1. Its function is as follows. Succinyl-CoA synthetase functions in the citric acid cycle (TCA), coupling the hydrolysis of succinyl-CoA to the synthesis of either ATP or GTP and thus represents the only step of substrate-level phosphorylation in the TCA. The beta subunit provides nucleotide specificity of the enzyme and binds the substrate succinate, while the binding sites for coenzyme A and phosphate are found in the alpha subunit. The sequence is that of Succinate--CoA ligase [ADP-forming] subunit beta from Pelodictyon phaeoclathratiforme (strain DSM 5477 / BU-1).